The following is a 182-amino-acid chain: Small ribosomal subunit protein uS4c (182 aa).

The S4 RNA-binding domain maps to 82–143; it reads MRLDNILFRL…KQRSKALIQN (62 aa).

Belongs to the universal ribosomal protein uS4 family. Part of the 30S ribosomal subunit. Contacts protein S5. The interaction surface between S4 and S5 is involved in control of translational fidelity.

The protein resides in the plastid. It localises to the chloroplast. One of the primary rRNA binding proteins, it binds directly to 16S rRNA where it nucleates assembly of the body of the 30S subunit. In terms of biological role, with S5 and S12 plays an important role in translational accuracy. The protein is Small ribosomal subunit protein uS4c (rps4) of Isophysis tasmanica.